Here is a 541-residue protein sequence, read N- to C-terminus: Capsid protein VP1 (541 aa).

The segment at 1–224 is shell domain; sequence MRMSDGAAPK…FVYLTPPIER (224 aa). The tract at residues 225–277 is P1 sub-domain 1; it reads TIYRMVDLPVIQPRLCTHARWPAPVYGLLVDPSLPSNPQWQNGRVHVDGTLLG. Residues 225 to 541 form a protruding domain region; sequence TIYRMVDLPV…SLATGRMLKQ (317 aa). Positions 278–416 are P2 sub-domain; it reads TTPISGSWVS…EYNDGLLVPL (139 aa). The interval 298-366 is interaction with host receptor CD300LF; the sequence is QSGTGEVATF…MILGPTTNAD (69 aa). The segment at 417-541 is P1 sub-domain 2; sequence APPIGPFLPG…SLATGRMLKQ (125 aa).

It belongs to the caliciviridae capsid protein family. As to quaternary structure, homodimer. Homomultimer. Interacts with the minor capsid protein VP2. Interacts (via P2 subdomain) with host receptor CD300LF (via N-terminus); this interaction requires Mg(2+) and Ca(2+), and allows viral binding and entry into the host cell. Stochioimetry is 2:2. Bile acids interact with the P domain dimer interface and act as cofactors enhancing virus binding and infectivity. Interacts with host receptor CD300LD; this interaction allows viral binding and entry into the host cell.

The protein resides in the virion. It is found in the host cytoplasm. Capsid protein self assembles to form an icosahedral capsid with a T=3 symmetry, about 38 nm in diameter, and consisting of 180 capsid proteins. A smaller form of capsid with a diameter of 23 nm might be capsid proteins assembled as icosahedron with T=1 symmetry. The capsid encapsulates the genomic RNA and is decorated with VP2 proteins. Mediates virion attachment to the host cell receptor CD300LF. The polypeptide is Capsid protein VP1 (Norovirus (isolate Mouse/NoV/United States/MNV1/2002/GV) (MNV-1)).